The sequence spans 190 residues: Threonylcarbamoyl-AMP synthase (190 aa).

One can recognise a YrdC-like domain in the interval 7–190 (SQDVASLVIA…ALSGELIRQG (184 aa)).

Belongs to the SUA5 family. TsaC subfamily.

The protein localises to the cytoplasm. It carries out the reaction L-threonine + hydrogencarbonate + ATP = L-threonylcarbamoyladenylate + diphosphate + H2O. Required for the formation of a threonylcarbamoyl group on adenosine at position 37 (t(6)A37) in tRNAs that read codons beginning with adenine. Catalyzes the conversion of L-threonine, HCO(3)(-)/CO(2) and ATP to give threonylcarbamoyl-AMP (TC-AMP) as the acyladenylate intermediate, with the release of diphosphate. In Sodalis glossinidius (strain morsitans), this protein is Threonylcarbamoyl-AMP synthase.